The primary structure comprises 435 residues: Centrosomal protein of 55 kDa (435 aa).

Disordered stretches follow at residues 1 to 63 (MAAK…TDKA), 213 to 239 (HKEA…KVSR), and 268 to 287 (ERRR…ALLQ). Coiled-coil stretches lie at residues 18 to 140 (SSSS…KNKY) and 185 to 373 (EAYV…RESR). Basic and acidic residues-rich tracts occupy residues 26–49 (AELE…DMKR) and 213–222 (HKEAKSDDQS).

It localises to the cytoplasm. The protein localises to the cytoskeleton. The protein resides in the microtubule organizing center. It is found in the centrosome. Its subcellular location is the centriole. It localises to the cleavage furrow. The protein localises to the midbody. The protein resides in the midbody ring. Its function is as follows. Plays a role in mitotic exit and cytokinesis. Recruits PDCD6IP and TSG101 to midbody during cytokinesis. Required for successful completion of cytokinesis. Not required for microtubule nucleation. Plays a role in the development of the brain and kidney. The polypeptide is Centrosomal protein of 55 kDa (Danio rerio (Zebrafish)).